Here is a 675-residue protein sequence, read N- to C-terminus: L-type lectin-domain containing receptor kinase IX.2 (675 aa).

A signal peptide spans 1–35 (MLYFIFCQNLSSSSSMSNSILFLSLFLFLPFVVDS). N-linked (GlcNAc...) asparagine glycans are attached at residues asparagine 9, asparagine 39, asparagine 110, asparagine 146, asparagine 179, asparagine 186, asparagine 191, and asparagine 212. The segment at 36 to 269 (LYFNFTSFRQ…EEHRLLSWEL (234 aa)) is legume-lectin like. Residues 36–281 (LYFNFTSFRQ…SLDSDKADSR (246 aa)) lie on the Extracellular side of the membrane. A helical membrane pass occupies residues 282–302 (IGLVIGISASGFVFLTFMVIT). Residues 303–675 (TVVVWSRKQR…VTFSGIEYGR (373 aa)) lie on the Cytoplasmic side of the membrane. The Protein kinase domain maps to 350–631 (FSSHRKLGEG…KQGIQVMNFE (282 aa)). ATP-binding positions include 356–364 (LGEGGFGAV) and lysine 379. Aspartate 475 functions as the Proton acceptor in the catalytic mechanism.

It in the C-terminal section; belongs to the protein kinase superfamily. Ser/Thr protein kinase family. This sequence in the N-terminal section; belongs to the leguminous lectin family. In terms of assembly, interacts with ABCG40.

The protein localises to the cell membrane. The enzyme catalyses L-seryl-[protein] + ATP = O-phospho-L-seryl-[protein] + ADP + H(+). It catalyses the reaction L-threonyl-[protein] + ATP = O-phospho-L-threonyl-[protein] + ADP + H(+). Functionally, promotes hydrogen peroxide H(2)O(2) production and cell death. Involved in resistance response to the pathogenic oomycetes Phytophthora infestans and Phytophthora capsici. This is L-type lectin-domain containing receptor kinase IX.2 from Arabidopsis thaliana (Mouse-ear cress).